A 193-amino-acid chain; its full sequence is Potassium-transporting ATPase KdpC subunit (193 aa).

Residues I14–A34 form a helical membrane-spanning segment.

It belongs to the KdpC family. The system is composed of three essential subunits: KdpA, KdpB and KdpC.

It localises to the cell membrane. Part of the high-affinity ATP-driven potassium transport (or Kdp) system, which catalyzes the hydrolysis of ATP coupled with the electrogenic transport of potassium into the cytoplasm. This subunit acts as a catalytic chaperone that increases the ATP-binding affinity of the ATP-hydrolyzing subunit KdpB by the formation of a transient KdpB/KdpC/ATP ternary complex. This is Potassium-transporting ATPase KdpC subunit from Bacillus mycoides (strain KBAB4) (Bacillus weihenstephanensis).